We begin with the raw amino-acid sequence, 316 residues long: Probable cell division protein WhiA (316 aa).

A DNA-binding region (H-T-H motif) is located at residues 277–310; the sequence is SLEQLGRLADPPITKDAIAGRIRRLLQLAEKTEK.

The protein belongs to the WhiA family.

Involved in cell division and chromosome segregation. This Bifidobacterium adolescentis (strain ATCC 15703 / DSM 20083 / NCTC 11814 / E194a) protein is Probable cell division protein WhiA.